The chain runs to 259 residues: DNA-directed RNA polymerase 30 kDa polypeptide (259 aa).

Residues Tyr-155–Lys-195 form a TFIIS-type zinc finger. Residues Cys-159, Cys-162, Cys-187, and Cys-190 each contribute to the Zn(2+) site. The interval Glu-220–Glu-259 is disordered. The segment covering Asn-226–Ala-236 has biased composition (pro residues).

The protein belongs to the poxviridae DNA-directed RNA polymerase 30 kDa subunit family. As to quaternary structure, the DNA-dependent RNA polymerase (vRNAP) consists of eight subunits encoded by early viral genes and termed according to their apparent molecular masses Rpo147, Rpo132, Rpo35, Rpo30, Rpo22, Rpo19, Rpo18, and Rpo7. The same holoenzyme, with the addition of the transcription-specificity factor RAP94, is used for early gene expression.

Its subcellular location is the virion. The protein resides in the host cytoplasm. It carries out the reaction RNA(n) + a ribonucleoside 5'-triphosphate = RNA(n+1) + diphosphate. Functionally, part of the DNA-dependent RNA polymerase which catalyzes the transcription of viral DNA into RNA using the four ribonucleoside triphosphates as substrates. Responsible for the transcription of early, intermediate and late genes. DNA-dependent RNA polymerase associates with the early transcription factor (ETF), itself composed of OPG118 and OPG134, thereby allowing the early genes transcription. Late transcription, and probably also intermediate transcription, require newly synthesized RNA polymerase. This Homo sapiens (Human) protein is DNA-directed RNA polymerase 30 kDa polypeptide (OPG066).